Here is a 351-residue protein sequence, read N- to C-terminus: Phosphoribosylformylglycinamidine cyclo-ligase (351 aa).

It belongs to the AIR synthase family.

It is found in the cytoplasm. It catalyses the reaction 2-formamido-N(1)-(5-O-phospho-beta-D-ribosyl)acetamidine + ATP = 5-amino-1-(5-phospho-beta-D-ribosyl)imidazole + ADP + phosphate + H(+). Its pathway is purine metabolism; IMP biosynthesis via de novo pathway; 5-amino-1-(5-phospho-D-ribosyl)imidazole from N(2)-formyl-N(1)-(5-phospho-D-ribosyl)glycinamide: step 2/2. The sequence is that of Phosphoribosylformylglycinamidine cyclo-ligase from Burkholderia vietnamiensis (strain G4 / LMG 22486) (Burkholderia cepacia (strain R1808)).